Reading from the N-terminus, the 491-residue chain is MANYFNTLNLRQQLDQLGRCRFMDRNEFANEADYLKGKKIVIVGCGAQGLNQGLNMRDSGLDISYALRAEAIAEKRASFQRATENGFKVGTYDELIPSADLVVNLTPDKQHSKVVADVMPLMKQGAALGYSHGLNIVEVGEQIRKDITVVMVAPKCPGTEVREEYKRGFGVPTLIAVHPENDPNGDGLEIAKAWAAATGGHRAGVLESSFVAEVKSDLMGEQTILCGMLQAGSIVCYDKLVADGKDPAYAGKLIQYGWETITEALKQGGITLMMDRLSNSAKLRAFELSEQIKAKLTFLFEKHMDDIISGEFSATMMADWANGDANLLKWREETGKTAFENAPKYEGKISEQEYFDHGVLMVAMVKAGVELAFDTMVASGIYEESAYYESLHELPLIANTIARKRLYEMNVVISDTAEYGNYLFANVATPILAKEIMPTLQKGDLGEPTPTVEIDNITLRDVNDAIRNHPIELIGQELRGYMTDMKRISSH.

The 195-residue stretch at 14 to 208 (LDQLGRCRFM…GGHRAGVLES (195 aa)) folds into the KARI N-terminal Rossmann domain. Residues 45–48 (CGAQ), R68, R76, S78, and 108–110 (DKQ) contribute to the NADP(+) site. H132 is an active-site residue. Residue G158 coordinates NADP(+). 2 KARI C-terminal knotted domains span residues 209–344 (SFVA…NAPK) and 345–485 (YEGK…MTDM). D217, E221, E389, and E393 together coordinate Mg(2+). S414 serves as a coordination point for substrate.

Belongs to the ketol-acid reductoisomerase family. Mg(2+) serves as cofactor.

It carries out the reaction (2R)-2,3-dihydroxy-3-methylbutanoate + NADP(+) = (2S)-2-acetolactate + NADPH + H(+). The enzyme catalyses (2R,3R)-2,3-dihydroxy-3-methylpentanoate + NADP(+) = (S)-2-ethyl-2-hydroxy-3-oxobutanoate + NADPH + H(+). The protein operates within amino-acid biosynthesis; L-isoleucine biosynthesis; L-isoleucine from 2-oxobutanoate: step 2/4. It participates in amino-acid biosynthesis; L-valine biosynthesis; L-valine from pyruvate: step 2/4. Its function is as follows. Involved in the biosynthesis of branched-chain amino acids (BCAA). Catalyzes an alkyl-migration followed by a ketol-acid reduction of (S)-2-acetolactate (S2AL) to yield (R)-2,3-dihydroxy-isovalerate. In the isomerase reaction, S2AL is rearranged via a Mg-dependent methyl migration to produce 3-hydroxy-3-methyl-2-ketobutyrate (HMKB). In the reductase reaction, this 2-ketoacid undergoes a metal-dependent reduction by NADPH to yield (R)-2,3-dihydroxy-isovalerate. This chain is Ketol-acid reductoisomerase (NADP(+)), found in Pasteurella multocida (strain Pm70).